We begin with the raw amino-acid sequence, 395 residues long: Succinyl-diaminopimelate desuccinylase (395 aa).

H81 is a Zn(2+) binding site. D83 is a catalytic residue. D114 serves as a coordination point for Zn(2+). E146 acts as the Proton acceptor in catalysis. Zn(2+) is bound by residues E147, E175, and H364.

The protein belongs to the peptidase M20A family. DapE subfamily. Homodimer. Zn(2+) is required as a cofactor. It depends on Co(2+) as a cofactor.

The catalysed reaction is N-succinyl-(2S,6S)-2,6-diaminopimelate + H2O = (2S,6S)-2,6-diaminopimelate + succinate. It functions in the pathway amino-acid biosynthesis; L-lysine biosynthesis via DAP pathway; LL-2,6-diaminopimelate from (S)-tetrahydrodipicolinate (succinylase route): step 3/3. Its function is as follows. Catalyzes the hydrolysis of N-succinyl-L,L-diaminopimelic acid (SDAP), forming succinate and LL-2,6-diaminopimelate (DAP), an intermediate involved in the bacterial biosynthesis of lysine and meso-diaminopimelic acid, an essential component of bacterial cell walls. This Parvibaculum lavamentivorans (strain DS-1 / DSM 13023 / NCIMB 13966) protein is Succinyl-diaminopimelate desuccinylase.